The sequence spans 224 residues: Orotidine 5'-phosphate decarboxylase (224 aa).

Residues D10, K32, 59–68 (DLKLHDIPNT), T115, R175, Q184, G204, and R205 contribute to the substrate site. The active-site Proton donor is K61.

This sequence belongs to the OMP decarboxylase family. Type 1 subfamily. As to quaternary structure, homodimer.

It carries out the reaction orotidine 5'-phosphate + H(+) = UMP + CO2. Its pathway is pyrimidine metabolism; UMP biosynthesis via de novo pathway; UMP from orotate: step 2/2. Catalyzes the decarboxylation of orotidine 5'-monophosphate (OMP) to uridine 5'-monophosphate (UMP). This chain is Orotidine 5'-phosphate decarboxylase, found in Sphingopyxis alaskensis (strain DSM 13593 / LMG 18877 / RB2256) (Sphingomonas alaskensis).